Consider the following 248-residue polypeptide: Ribosomal RNA small subunit methyltransferase G (248 aa).

The disordered stretch occupies residues 1–23 (MFHVKHVGPVEPAAGDPEVPPVA). Residues glycine 93, leucine 98, 143 to 144 (AE), and arginine 161 contribute to the S-adenosyl-L-methionine site. Positions 226–248 (VVSARRAKPPHPKSARTGKAGTR) are disordered. The segment covering 230–248 (RRAKPPHPKSARTGKAGTR) has biased composition (basic residues).

This sequence belongs to the methyltransferase superfamily. RNA methyltransferase RsmG family.

It is found in the cytoplasm. Functionally, specifically methylates the N7 position of guanine in position 518 of 16S rRNA. This chain is Ribosomal RNA small subunit methyltransferase G, found in Mycolicibacterium paratuberculosis (strain ATCC BAA-968 / K-10) (Mycobacterium paratuberculosis).